The chain runs to 822 residues: von Willebrand factor A domain-containing protein 5A (822 aa).

One can recognise a VIT domain in the interval 1-131; sequence MEHHWGLITG…KVAVTLRYVQ (131 aa). Positions 281 to 469 constitute a VWFA domain; sequence EFVFLMDRSG…LALQCALDDI (189 aa). Residues 657–682 form a disordered region; that stretch reads SMPSPAPIENQGVADSSNEKSNSQNE. The segment covering 669-680 has biased composition (polar residues); the sequence is VADSSNEKSNSQ.

May play a role in tumorigenesis as a tumor suppressor. Altered expression of this protein and disruption of the molecular pathway it is involved in may contribute directly to or modify tumorigenesis. This Rattus norvegicus (Rat) protein is von Willebrand factor A domain-containing protein 5A (Vwa5a).